An 890-amino-acid polypeptide reads, in one-letter code: Pentatricopeptide repeat-containing protein At3g57430, chloroplastic (890 aa).

The transit peptide at 1-44 (MSCPLAFTFSLPSIFPFPSQLLPFSRHKHPYLLRATPTSATEDV) directs the protein to the chloroplast. PPR repeat units lie at residues 61 to 95 (SPEWWIDLLRSKVRSNLLREAVLTYVDMIVLGIKP), 96 to 130 (DNYAFPALLKAVADLQDMELGKQIHAHVYKFGYGV), 132 to 162 (SVTVANTLVNLYRKCGDFGAVYKVFDRISER), 163 to 197 (NQVSWNSLISSLCSFEKWEMALEAFRCMLDENVEP), 198 to 231 (SSFTLVSVVTACSNLPMPEGLMMGKQVHAYGLRK), 235 to 265 (NSFIINTLVAMYGKLGKLASSKVLLGSFGGR), 266 to 300 (DLVTWNTVLSSLCQNEQLLEALEYLREMVLEGVEP), 301 to 335 (DEFTISSVLPACSHLEMLRTGKELHAYALKNGSLD), 337 to 371 (NSFVGSALVDMYCNCKQVLSGRRVFDGMFDRKIGL), 372 to 398 (WNAMIAGYSQNEHDKEALLLFIGMEES), 404 to 438 (NSTTMAGVVPACVRSGAFSRKEAIHGFVVKRGLDR), 439 to 473 (DRFVQNTLMDMYSRLGKIDIAMRIFGKMEDRDLVT), 474 to 504 (WNTMITGYVFSEHHEDALLLLHKMQNLERKV), 516 to 550 (NSITLMTILPSCAALSALAKGKEIHAYAIKNNLAT), 551 to 581 (DVAVGSALVDMYAKCGCLQMSRKVFDQIPQK), 582 to 616 (NVITWNVIIMAYGMHGNGQEAIDLLRMMMVQGVKP), 617 to 652 (NEVTFISVFAACSHSGMVDEGLRIFYVMKPDYGVEP), and 653 to 683 (SSDHYACVVDLLGRAGRIKEAYQLMNMMPRD). The type E motif stretch occupies residues 689-764 (AWSSLLGASR…EPGCSWIEHG (76 aa)). Residues 765–795 (DEVHKFVAGDSSHPQSEKLSGYLETLWERMR) are type E(+) motif. A type DYW motif region spans residues 796–890 (KEGYVPDTSC…NGTCSCGDYW (95 aa)).

The protein belongs to the PPR family. PCMP-H subfamily.

The protein resides in the plastid. The protein localises to the chloroplast. In terms of biological role, involved in RNA editing events in chloroplasts. Required for the editing of a single site in ndhB and ndhF transcripts, which are two plastid-encoded subunits of the chloroplast NAD(P)H dehydrogenase (NDH) complex. Required for the editing of a single site in psbZ. Required for optimal activity of the NDH complex of the photosynthetic electron transport chain. The protein is Pentatricopeptide repeat-containing protein At3g57430, chloroplastic (PCMP-H81) of Arabidopsis thaliana (Mouse-ear cress).